The sequence spans 702 residues: DnaJ homolog subfamily C member 14 (702 aa).

Disordered stretches follow at residues 1 to 148 (MAQK…GGNG) and 165 to 229 (DELE…KRSQ). Residues 75–84 (HGPPGGPGPP) are compositionally biased toward pro residues. Acidic residues predominate over residues 88–103 (EDPDQSETSSEEESGV). The span at 113–133 (TGNQKDGNSFLSIPSACNCQG) shows a compositional bias: polar residues. Positions 165-175 (DELEEEYDDEE) are enriched in acidic residues. Residues 192–201 (PPSRRQRHRF) show a composition bias toward basic residues. Basic and acidic residues predominate over residues 202–217 (PTKEDTREGGRRDPRS). Residues 218 to 227 (PGRHRLGRKR) are compositionally biased toward basic residues. A run of 3 helical transmembrane segments spans residues 250-270 (AGFW…ETCG), 300-320 (GWAQ…VGLF), and 326-346 (LLGA…QLGW). Positions 443–507 (NPFHVLGVEA…EKRKEYEMKR (65 aa)) constitute a J domain. A disordered region spans residues 658–702 (MPNGNFFAAPQPAPGAAAASKPNSTVPKGEAKPKRRKKVRRPFQR). Residues 659–676 (PNGNFFAAPQPAPGAAAA) are compositionally biased toward low complexity. Positions 690-702 (PKRRKKVRRPFQR) are enriched in basic residues.

In terms of assembly, interacts with the FxxxFxxxF motif of DRD1 via its C-terminal domain. Highly expressed in pancreas and selectively expressed in brain, lung, liver, skeletal muscle and kidney.

The protein localises to the endoplasmic reticulum membrane. Functionally, regulates the export of target proteins, such as DRD1, from the endoplasmic reticulum to the cell surface. This chain is DnaJ homolog subfamily C member 14 (DNAJC14), found in Homo sapiens (Human).